The primary structure comprises 493 residues: Cytochrome P450 710A3 (493 aa).

A helical membrane pass occupies residues 5–25 (VSLFASLTPYLVSALLLFLLL). Position 435 (Cys435) interacts with heme.

This sequence belongs to the cytochrome P450 family. The cofactor is heme. Expressed in stems. Detected in primary root caps and immature petals.

The protein resides in the membrane. It carries out the reaction 5-dehydroepisterol + NADPH + O2 + H(+) = ergosta-5,7,22,24(28)-tetraen-3beta-ol + NADP(+) + 2 H2O. Functionally, required to form the C-22 double bond in the sterol side chain. Possesses in vitro C-22 desaturase activity toward beta-sitosterol and produces stigmasterol. The sequence is that of Cytochrome P450 710A3 from Arabidopsis thaliana (Mouse-ear cress).